We begin with the raw amino-acid sequence, 181 residues long: Protein GrpE (181 aa).

Polar residues predominate over residues 1 to 13; sequence MENTQENPATQSA. Positions 1–34 are disordered; that stretch reads MENTQENPATQSAEDIGSAKQAAQGAAPAAEAAD. Over residues 19–34 the composition is skewed to low complexity; that stretch reads AKQAAQGAAPAAEAAD.

This sequence belongs to the GrpE family. As to quaternary structure, homodimer.

The protein localises to the cytoplasm. Its function is as follows. Participates actively in the response to hyperosmotic and heat shock by preventing the aggregation of stress-denatured proteins, in association with DnaK and GrpE. It is the nucleotide exchange factor for DnaK and may function as a thermosensor. Unfolded proteins bind initially to DnaJ; upon interaction with the DnaJ-bound protein, DnaK hydrolyzes its bound ATP, resulting in the formation of a stable complex. GrpE releases ADP from DnaK; ATP binding to DnaK triggers the release of the substrate protein, thus completing the reaction cycle. Several rounds of ATP-dependent interactions between DnaJ, DnaK and GrpE are required for fully efficient folding. This chain is Protein GrpE, found in Burkholderia vietnamiensis (strain G4 / LMG 22486) (Burkholderia cepacia (strain R1808)).